Consider the following 309-residue polypeptide: Branched-chain-amino-acid aminotransferase (309 aa).

Lys-160 is modified (N6-(pyridoxal phosphate)lysine).

The protein belongs to the class-IV pyridoxal-phosphate-dependent aminotransferase family. In terms of assembly, homohexamer. Pyridoxal 5'-phosphate is required as a cofactor.

It carries out the reaction L-leucine + 2-oxoglutarate = 4-methyl-2-oxopentanoate + L-glutamate. The catalysed reaction is L-isoleucine + 2-oxoglutarate = (S)-3-methyl-2-oxopentanoate + L-glutamate. The enzyme catalyses L-valine + 2-oxoglutarate = 3-methyl-2-oxobutanoate + L-glutamate. The protein operates within amino-acid biosynthesis; L-isoleucine biosynthesis; L-isoleucine from 2-oxobutanoate: step 4/4. It participates in amino-acid biosynthesis; L-leucine biosynthesis; L-leucine from 3-methyl-2-oxobutanoate: step 4/4. Its pathway is amino-acid biosynthesis; L-valine biosynthesis; L-valine from pyruvate: step 4/4. In terms of biological role, acts on leucine, isoleucine and valine. The protein is Branched-chain-amino-acid aminotransferase (ilvE) of Salmonella typhi.